Reading from the N-terminus, the 47-residue chain is Small ribosomal subunit protein uS14 (47 aa).

Zn(2+) is bound by residues Cys12, Cys15, Cys30, and Cys33.

Belongs to the universal ribosomal protein uS14 family. Zinc-binding uS14 subfamily. As to quaternary structure, part of the 30S ribosomal subunit. It depends on Zn(2+) as a cofactor.

Its function is as follows. Binds 16S rRNA, required for the assembly of 30S particles. The chain is Small ribosomal subunit protein uS14 from Methanosphaera stadtmanae (strain ATCC 43021 / DSM 3091 / JCM 11832 / MCB-3).